Consider the following 158-residue polypeptide: MAEHHHTISGLVGKLVTELEVNCNADEYYKIFKHHEDLPNAIPHIYRGVKAVEGDRITSGFIKEWHYIIEGKPLTCKERTTYEDEARTIHHSTVEGVLLDDYKKFDATLVNPKADGHGSIVTWIVEYEKINEDSPVPISYLTFHKIIEDLNTYLCASD.

It belongs to the MLP family. As to expression, laticifer.

Its subcellular location is the vacuole. The protein resides in the cytoplasmic vesicle. Not known; MLPs constitute up to 50% of the soluble latex protein. This chain is Major latex protein 22 (MLP22), found in Papaver somniferum (Opium poppy).